A 387-amino-acid chain; its full sequence is Ubiquitin-conjugating enzyme E2 25 (387 aa).

A disordered region spans residues Ala-117–Asp-164. Positions Val-120–Asp-131 are enriched in basic and acidic residues. Over residues Pro-139–Asp-164 the composition is skewed to acidic residues. One can recognise a UBC core domain in the interval Thr-214 to Tyr-380. The active-site Glycyl thioester intermediate is Cys-315.

It belongs to the ubiquitin-conjugating enzyme family. As to expression, in the embryo, expressed in precursor neuron and muscle cells and in other cells such as hypodermal cells. After hatching of L1 larvae and in all subsequent stages, strongest expression in pharyngeal muscle and anal muscle cells. In L4 larvae and adolescent hermaphrodites, also expressed in the vulval muscles. Expression also detected in all four nerve cords and in neurons with weaker levels in all body wall muscles.

The protein resides in the cytoplasm. The protein localises to the nucleus. The catalysed reaction is S-ubiquitinyl-[E1 ubiquitin-activating enzyme]-L-cysteine + [E2 ubiquitin-conjugating enzyme]-L-cysteine = [E1 ubiquitin-activating enzyme]-L-cysteine + S-ubiquitinyl-[E2 ubiquitin-conjugating enzyme]-L-cysteine.. It participates in protein modification; protein ubiquitination. Functionally, catalyzes the covalent attachment of ubiquitin to other proteins (Potential). Required for the maintenance of neuromuscular function. The sequence is that of Ubiquitin-conjugating enzyme E2 25 from Caenorhabditis elegans.